The sequence spans 399 residues: Nicotinate phosphoribosyltransferase (399 aa).

Residue histidine 217 is modified to Phosphohistidine; by autocatalysis.

The protein belongs to the NAPRTase family. Post-translationally, transiently phosphorylated on a His residue during the reaction cycle. Phosphorylation strongly increases the affinity for substrates and increases the rate of nicotinate D-ribonucleotide production. Dephosphorylation regenerates the low-affinity form of the enzyme, leading to product release.

It catalyses the reaction nicotinate + 5-phospho-alpha-D-ribose 1-diphosphate + ATP + H2O = nicotinate beta-D-ribonucleotide + ADP + phosphate + diphosphate. Its pathway is cofactor biosynthesis; NAD(+) biosynthesis; nicotinate D-ribonucleotide from nicotinate: step 1/1. Catalyzes the synthesis of beta-nicotinate D-ribonucleotide from nicotinate and 5-phospho-D-ribose 1-phosphate at the expense of ATP. This is Nicotinate phosphoribosyltransferase from Burkholderia ambifaria (strain MC40-6).